The chain runs to 189 residues: Ras-like protein 1 (189 aa).

10-17 (GAGGVGKS) serves as a coordination point for GTP. The short motif at 32-40 (YDPTIEDSY) is the Effector region element. Residues 57-61 (DTAGQ) and 116-119 (NKCD) contribute to the GTP site. Cys-186 bears the Cysteine methyl ester mark. Cys-186 is lipidated: S-geranylgeranyl cysteine. Residues 187–189 (KML) constitute a propeptide, removed in mature form.

The protein belongs to the small GTPase superfamily. Ras family.

It is found in the cell membrane. It catalyses the reaction GTP + H2O = GDP + phosphate + H(+). With respect to regulation, alternates between an inactive form bound to GDP and an active form bound to GTP. Activated by a guanine nucleotide-exchange factor (GEF) and inactivated by a GTPase-activating protein (GAP). Its function is as follows. Ras proteins bind GDP/GTP and possess intrinsic GTPase activity. Plays a role in eye development by regulating cell growth, survival of postmitotic ommatidial cells and differentiation of photoreceptor cells. During larval development, mediates Ptth/tor signaling leading to the production of ecdysone, a hormone required for the initiation of metamorphosis. This is Ras-like protein 1 from Drosophila ananassae (Fruit fly).